The chain runs to 403 residues: Digeranylgeranylglycerophospholipid reductase 1 (403 aa).

Residues Ala14, Asp33, Cys44, Ala45, Gly47, Arg98, Val122, Asp277, Gly289, and Ile290 each contribute to the FAD site.

The protein belongs to the geranylgeranyl reductase family. DGGGPL reductase subfamily. It depends on FAD as a cofactor.

The enzyme catalyses a 2,3-bis-O-phytanyl-sn-glycerol 1-phospholipid + 8 A = a 2,3-bis-O-(geranylgeranyl)-sn-glycerol 1-phospholipid + 8 AH2. The catalysed reaction is 2,3-bis-O-(phytanyl)-sn-glycerol 1-phosphate + 8 A = 2,3-bis-O-(geranylgeranyl)-sn-glycerol 1-phosphate + 8 AH2. It catalyses the reaction CDP-2,3-bis-O-(geranylgeranyl)-sn-glycerol + 8 AH2 = CDP-2,3-bis-O-(phytanyl)-sn-glycerol + 8 A. It carries out the reaction archaetidylserine + 8 AH2 = 2,3-bis-O-phytanyl-sn-glycero-3-phospho-L-serine + 8 A. It functions in the pathway membrane lipid metabolism; glycerophospholipid metabolism. Its function is as follows. Is involved in the reduction of 2,3-digeranylgeranylglycerophospholipids (unsaturated archaeols) into 2,3-diphytanylglycerophospholipids (saturated archaeols) in the biosynthesis of archaeal membrane lipids. Catalyzes the formation of archaetidic acid (2,3-di-O-phytanyl-sn-glyceryl phosphate) from 2,3-di-O-geranylgeranylglyceryl phosphate (DGGGP) via the hydrogenation of each double bond of the isoprenoid chains. Is also probably able to reduce double bonds of geranyl groups in CDP-2,3-bis-O-(geranylgeranyl)-sn-glycerol and archaetidylserine, thus acting at various stages in the biosynthesis of archaeal membrane lipids. The protein is Digeranylgeranylglycerophospholipid reductase 1 of Methanosphaera stadtmanae (strain ATCC 43021 / DSM 3091 / JCM 11832 / MCB-3).